The sequence spans 224 residues: MVLLSKFDFFGNKAGEVELPDAFFAQEGNGLQLVKDYIVAIRANKRQWSACTRNRSEVSHSTKKPFRQKGTGNARQGCLAAPQFRGGGIVFGPKPKFDQHVRINKKEKRAAIRLLLSQKIQTNRLIVADDSVFTKSLTAPKTKEALRFLKSCNVECRGVLFIDDLNHAQNNEGLRLSLRNLPAVRGFAYGMNVNGYDLVSARNIVISEKALTGLVGHLTSGTKD.

The disordered stretch occupies residues 54-73 (NRSEVSHSTKKPFRQKGTGN).

It belongs to the universal ribosomal protein uL4 family. As to quaternary structure, part of the 50S ribosomal subunit.

One of the primary rRNA binding proteins, this protein initially binds near the 5'-end of the 23S rRNA. It is important during the early stages of 50S assembly. It makes multiple contacts with different domains of the 23S rRNA in the assembled 50S subunit and ribosome. Its function is as follows. Forms part of the polypeptide exit tunnel. In Chlamydia felis (strain Fe/C-56) (Chlamydophila felis), this protein is Large ribosomal subunit protein uL4.